Here is a 727-residue protein sequence, read N- to C-terminus: Translation initiation factor IF-2, mitochondrial (727 aa).

The transit peptide at 1 to 29 (MNQKLLKLENLLRFHTIYRQLHSLCQRRA) directs the protein to the mitochondrion. Residues 178 to 348 (PRSPVVTIMG…VALAEMLELK (171 aa)) form the tr-type G domain. Residues 187-194 (GHVDHGKT) form a G1 region. 187-194 (GHVDHGKT) serves as a coordination point for GTP. Residues 212–216 (GITQH) form a G2 region. Residues 234 to 237 (DTPG) and 288 to 291 (NKCD) each bind GTP. The segment at 234-237 (DTPG) is G3. The segment at 288 to 291 (NKCD) is G4. The segment at 324–326 (SAL) is G5. Threonine 688 carries the post-translational modification Phosphothreonine.

Belongs to the TRAFAC class translation factor GTPase superfamily. Classic translation factor GTPase family. IF-2 subfamily. Monomer. Expressed in all tissues examined. Highest level in skeletal muscle.

The protein localises to the mitochondrion. Functionally, one of the essential components for the initiation of protein synthesis. Protects formylmethionyl-tRNA from spontaneous hydrolysis and promotes its binding to the 30S ribosomal subunits. Also involved in the hydrolysis of GTP during the formation of the 70S ribosomal complex. In Homo sapiens (Human), this protein is Translation initiation factor IF-2, mitochondrial (MTIF2).